A 522-amino-acid polypeptide reads, in one-letter code: MSKQKLWIDDLNSFFGDWSLIPTSKMTREEKLNTITRLILIASLVLLLFGKKDASLYILIIGLIIVIVIYSQEKPSTVEGFEIINGEIVDDEGEKNEIATNLGTPSSYQGGASKGRTIGGVTLPGGRAPIYTCNVTYYPTTMSGNSVMITGKNNALVGPQNPKTLMPPPIAPPLGDLDTWKASEWTTHSHVNSRTVQYEDEAGPFRTFNNNDERVLPVNCLSSYEDDQANNPCFRRYQSGIGIKNEIGIMEPFEHTPNLIKGETPPLIKELDEPYEPTFARRANDEKDIIEPFISELQPGIYSSNIDQPILDNAGLLPDMPQPQTTLFTPMINGKPRDKMQIYVEDKEADAIPGITDSGYHTLDRAYDLPQRYVRERLPKRYGEWRARRSTMPGIPFETPVGYGSGARPIGSFPTEGAVVSPPGNACTGWVTGIENVRDLSGQSEMSEYYNKNKLDMFDVDENAPLYAINPDAVKMHIDVTNRFRSDMQESLMRKRNAEAWQRKMYPLDTNHRRMLGGTGQF.

2 consecutive transmembrane segments (helical) span residues 33–50 (NTIT…LLFG) and 55–72 (SLYI…IYSQ).

It belongs to the IIV-6 213R family.

It is found in the membrane. The protein is Transmembrane protein 213R of Invertebrate iridescent virus 6 (IIV-6).